Here is a 241-residue protein sequence, read N- to C-terminus: Ribonuclease PH (241 aa).

Phosphate-binding positions include Arg-89 and 127–129 (GTR).

This sequence belongs to the RNase PH family. As to quaternary structure, homohexameric ring arranged as a trimer of dimers.

The catalysed reaction is tRNA(n+1) + phosphate = tRNA(n) + a ribonucleoside 5'-diphosphate. Functionally, phosphorolytic 3'-5' exoribonuclease that plays an important role in tRNA 3'-end maturation. Removes nucleotide residues following the 3'-CCA terminus of tRNAs; can also add nucleotides to the ends of RNA molecules by using nucleoside diphosphates as substrates, but this may not be physiologically important. Probably plays a role in initiation of 16S rRNA degradation (leading to ribosome degradation) during starvation. In Xanthomonas campestris pv. campestris (strain 8004), this protein is Ribonuclease PH.